We begin with the raw amino-acid sequence, 126 residues long: Large ribosomal subunit protein bL20 (126 aa).

This sequence belongs to the bacterial ribosomal protein bL20 family.

Binds directly to 23S ribosomal RNA and is necessary for the in vitro assembly process of the 50S ribosomal subunit. It is not involved in the protein synthesizing functions of that subunit. This Parafrankia sp. (strain EAN1pec) protein is Large ribosomal subunit protein bL20.